We begin with the raw amino-acid sequence, 365 residues long: UDP-N-acetylglucosamine--N-acetylmuramyl-(pentapeptide) pyrophosphoryl-undecaprenol N-acetylglucosamine transferase (365 aa).

UDP-N-acetyl-alpha-D-glucosamine is bound by residues 19 to 21 (TGG), Asn131, Arg170, Ser201, Ile255, 274 to 279 (ALTVTE), and Gln300.

The protein belongs to the glycosyltransferase 28 family. MurG subfamily.

Its subcellular location is the cell inner membrane. The catalysed reaction is di-trans,octa-cis-undecaprenyl diphospho-N-acetyl-alpha-D-muramoyl-L-alanyl-D-glutamyl-meso-2,6-diaminopimeloyl-D-alanyl-D-alanine + UDP-N-acetyl-alpha-D-glucosamine = di-trans,octa-cis-undecaprenyl diphospho-[N-acetyl-alpha-D-glucosaminyl-(1-&gt;4)]-N-acetyl-alpha-D-muramoyl-L-alanyl-D-glutamyl-meso-2,6-diaminopimeloyl-D-alanyl-D-alanine + UDP + H(+). It participates in cell wall biogenesis; peptidoglycan biosynthesis. Its function is as follows. Cell wall formation. Catalyzes the transfer of a GlcNAc subunit on undecaprenyl-pyrophosphoryl-MurNAc-pentapeptide (lipid intermediate I) to form undecaprenyl-pyrophosphoryl-MurNAc-(pentapeptide)GlcNAc (lipid intermediate II). This is UDP-N-acetylglucosamine--N-acetylmuramyl-(pentapeptide) pyrophosphoryl-undecaprenol N-acetylglucosamine transferase from Acinetobacter baumannii (strain ACICU).